Consider the following 369-residue polypeptide: Glutamate 5-kinase (369 aa).

Residue K9 coordinates ATP. S49, D136, and N148 together coordinate substrate. ATP-binding positions include 168–169 (TD) and 210–216 (TGGMLTK). One can recognise a PUA domain in the interval 275–355 (QGSIWVDKGA…KGVLIYRDDW (81 aa)).

It belongs to the glutamate 5-kinase family.

Its subcellular location is the cytoplasm. It catalyses the reaction L-glutamate + ATP = L-glutamyl 5-phosphate + ADP. It participates in amino-acid biosynthesis; L-proline biosynthesis; L-glutamate 5-semialdehyde from L-glutamate: step 1/2. In terms of biological role, catalyzes the transfer of a phosphate group to glutamate to form L-glutamate 5-phosphate. The chain is Glutamate 5-kinase from Streptococcus pneumoniae serotype 2 (strain D39 / NCTC 7466).